We begin with the raw amino-acid sequence, 906 residues long: Protein translocase subunit SecA (906 aa).

ATP-binding positions include Gln86, Gly104 to Thr108, and Asp511. Composition is skewed to basic and acidic residues over residues His853–Glu865 and Val877–Asp888. Residues His853 to Glu906 are disordered. The Zn(2+) site is built by Cys890, Cys892, Cys901, and His902. Over residues Lys896–Glu906 the composition is skewed to basic residues.

Belongs to the SecA family. As to quaternary structure, monomer and homodimer. Part of the essential Sec protein translocation apparatus which comprises SecA, SecYEG and auxiliary proteins SecDF-YajC and YidC. Zn(2+) serves as cofactor.

The protein localises to the cell inner membrane. Its subcellular location is the cytoplasm. It carries out the reaction ATP + H2O + cellular proteinSide 1 = ADP + phosphate + cellular proteinSide 2.. In terms of biological role, part of the Sec protein translocase complex. Interacts with the SecYEG preprotein conducting channel. Has a central role in coupling the hydrolysis of ATP to the transfer of proteins into and across the cell membrane, serving both as a receptor for the preprotein-SecB complex and as an ATP-driven molecular motor driving the stepwise translocation of polypeptide chains across the membrane. This is Protein translocase subunit SecA from Francisella tularensis subsp. holarctica (strain FTNF002-00 / FTA).